The chain runs to 175 residues: Large ribosomal subunit protein uL10 (175 aa).

The protein belongs to the universal ribosomal protein uL10 family. In terms of assembly, part of the ribosomal stalk of the 50S ribosomal subunit. The N-terminus interacts with L11 and the large rRNA to form the base of the stalk. The C-terminus forms an elongated spine to which L12 dimers bind in a sequential fashion forming a multimeric L10(L12)X complex.

In terms of biological role, forms part of the ribosomal stalk, playing a central role in the interaction of the ribosome with GTP-bound translation factors. The sequence is that of Large ribosomal subunit protein uL10 from Synechococcus sp. (strain WH7803).